Reading from the N-terminus, the 604-residue chain is MLLKELSSLASPLSQPQVEKLKQLTAELNAVQLAWVSGYLAATANASGNLAQLAPVSDAPAAQTVTILYGSQTGNGRGIAKALAEKAKAQGYSVNLASMGEYNVRQLKQETLLLLVVSTHGEGEAPDDAIELHKFLASKRAPQLNNLHYSVLALGDSSYEFFCQTGKDFDARLSALGAKALLPLVECDVDYEAAAGQWHADVLTAVKPLIQTTANVVALNDTGSAQVASESEFTKQNPYSAEVLVSQKITGRGSDRDVRHVEIDLGESGLRYEVGDALGVWFSNNETLVDEILAGLGLAADATVTVGNESINLKQALIEKKELTQLYPGLVKAWAELSASPELLAISEDKEQVRQFILHHQFADLVANYQLKADANLDANKLVELLRPLTPRLYSIASSQSEVDTEVHLTVALVEDEHQGQARFGGASHFLASAEEGAEVKVYVEPNKHFRLPEDPQTPVIMIGPGTGVAPFRAFMQERVAQGAEGDSWLFFGNPHFEQDFLYQTEWQQYLKNGDLTRIDVAFSRDQAHKIYVQHRIKEQGQTLWQWLQNGAHLYICGDAERMAKDVHQALLAVAVEFGGLSSEAAEEYFETLRSHKRYQKDVY.

Positions 65–203 constitute a Flavodoxin-like domain; it reads VTILYGSQTG…AAGQWHADVL (139 aa). FMN contacts are provided by residues 71-76, 118-121, and 154-163; these read SQTGNG, STHG, and LGDSSYEFFC. In terms of domain architecture, FAD-binding FR-type spans 236–453; sequence QNPYSAEVLV…VEPNKHFRLP (218 aa). Residues Thr324, Leu358, 392-395, 410-412, and 425-428 contribute to the FAD site; these read RLYS, TVA, and GGAS. NADP(+) is bound by residues 524-525, 530-534, and Asp566; these read SR and KIYVQ. Residue Tyr604 participates in FAD binding.

It belongs to the NADPH-dependent sulphite reductase flavoprotein subunit CysJ family. This sequence in the N-terminal section; belongs to the flavodoxin family. In the C-terminal section; belongs to the flavoprotein pyridine nucleotide cytochrome reductase family. Alpha(8)-beta(8). The alpha component is a flavoprotein, the beta component is a hemoprotein. The cofactor is FAD. FMN serves as cofactor.

The catalysed reaction is hydrogen sulfide + 3 NADP(+) + 3 H2O = sulfite + 3 NADPH + 4 H(+). It participates in sulfur metabolism; hydrogen sulfide biosynthesis; hydrogen sulfide from sulfite (NADPH route): step 1/1. Its function is as follows. Component of the sulfite reductase complex that catalyzes the 6-electron reduction of sulfite to sulfide. This is one of several activities required for the biosynthesis of L-cysteine from sulfate. The flavoprotein component catalyzes the electron flow from NADPH -&gt; FAD -&gt; FMN to the hemoprotein component. This chain is Sulfite reductase [NADPH] flavoprotein alpha-component, found in Shewanella sp. (strain ANA-3).